The following is a 285-amino-acid chain: Ribosomal RNA small subunit methyltransferase H (285 aa).

S-adenosyl-L-methionine contacts are provided by residues 34-36 (AGH), Asp51, Phe75, Asp96, and His103. The disordered stretch occupies residues 259–285 (LVPSEKEAAQNPRARSAKLRAAEKEAP).

It belongs to the methyltransferase superfamily. RsmH family.

Its subcellular location is the cytoplasm. It carries out the reaction cytidine(1402) in 16S rRNA + S-adenosyl-L-methionine = N(4)-methylcytidine(1402) in 16S rRNA + S-adenosyl-L-homocysteine + H(+). In terms of biological role, specifically methylates the N4 position of cytidine in position 1402 (C1402) of 16S rRNA. The polypeptide is Ribosomal RNA small subunit methyltransferase H (Thermus thermophilus (strain ATCC 27634 / DSM 579 / HB8)).